We begin with the raw amino-acid sequence, 183 residues long: Apo-citrate lyase phosphoribosyl-dephospho-CoA transferase (183 aa).

It belongs to the CitX family.

It carries out the reaction apo-[citrate lyase ACP] + 2'-(5''-triphospho-alpha-D-ribosyl)-3'-dephospho-CoA = holo-[citrate lyase ACP] + diphosphate. Functionally, transfers 2-(5''-triphosphoribosyl)-3'-dephosphocoenzyme-A on a serine residue to the apo-acyl carrier protein (gamma chain) of the citrate lyase to yield holo-acyl carrier protein. This is Apo-citrate lyase phosphoribosyl-dephospho-CoA transferase from Escherichia coli O139:H28 (strain E24377A / ETEC).